Consider the following 99-residue polypeptide: Class II hydrophobin B (99 aa).

Positions methionine 1–alanine 15 are cleaved as a signal peptide. 2 disulfide bridges follow: cysteine 30–cysteine 79 and cysteine 40–cysteine 70.

It belongs to the cerato-ulmin hydrophobin family.

The protein localises to the secreted. It localises to the cell wall. The protein resides in the vacuole. Its subcellular location is the cytoplasmic vesicle. Aerial growth, conidiation, and dispersal of filamentous fungi in the environment rely upon a capability of their secreting small amphipathic proteins called hydrophobins (HPBs) with low sequence identity. Class I can self-assemble into an outermost layer of rodlet bundles on aerial cell surfaces, conferring cellular hydrophobicity that supports fungal growth, development and dispersal; whereas Class II form highly ordered films at water-air interfaces through intermolecular interactions but contribute nothing to the rodlet structure. Hyd2B contributes to certain cell wall-related features, such as hydrophobicity but is not involved in cell wall-related events during fungal proliferation in host hemocoel. Does not contribute to conidial hydrophobicity. Involved in insect hemocoel colonization independent of cell hydrophobicity. The protein is Class II hydrophobin B of Beauveria bassiana (strain ARSEF 2860) (White muscardine disease fungus).